Reading from the N-terminus, the 869-residue chain is DNA mismatch repair protein MutS (869 aa).

G602–S609 lines the ATP pocket.

It belongs to the DNA mismatch repair MutS family.

In terms of biological role, this protein is involved in the repair of mismatches in DNA. It is possible that it carries out the mismatch recognition step. This protein has a weak ATPase activity. The chain is DNA mismatch repair protein MutS from Bacillus licheniformis (strain ATCC 14580 / DSM 13 / JCM 2505 / CCUG 7422 / NBRC 12200 / NCIMB 9375 / NCTC 10341 / NRRL NRS-1264 / Gibson 46).